The primary structure comprises 134 residues: DNA-binding protein inhibitor ID-2 (134 aa).

Residues Ser14 and Ser25 each carry the phosphoserine modification. Positions 23-75 (SRSKTPVDDPMSLLYNMNDCYSKLKELVPSIPQNKKVSKMEILQHVIDYILDL) constitute a bHLH domain. The short motif at 106-115 (LNTDISILSL) is the Nuclear export signal element.

As to quaternary structure, interacts with GATA4 and NKX2-5. Interacts with NR0B2. Interacts with CLOCK and BMAL1. Interacts with IFI204. Interacts with NEDD9/HEF1. Interacts with ASB4; this interaction promotes ID2 proteasomal degradation. Ubiquitinated in a ASB4-depedent manner, leading to proteasomal degradation. In terms of processing, phosphorylated in vitro by CDK1, PKA and PKC. Highly expressed in early fetal tissues, including those of the central nervous system.

The protein resides in the cytoplasm. It is found in the nucleus. Transcriptional regulator (lacking a basic DNA binding domain) which negatively regulates the basic helix-loop-helix (bHLH) transcription factors by forming heterodimers and inhibiting their DNA binding and transcriptional activity. Implicated in regulating a variety of cellular processes, including cellular growth, senescence, differentiation, apoptosis, angiogenesis, and neoplastic transformation. Inhibits skeletal muscle and cardiac myocyte differentiation. Regulates the circadian clock by repressing the transcriptional activator activity of the CLOCK-BMAL1 heterodimer. Restricts the CLOCK and BMAL1 localization to the cytoplasm. Plays a role in both the input and output pathways of the circadian clock: in the input component, is involved in modulating the magnitude of photic entrainment and in the output component, contributes to the regulation of a variety of liver clock-controlled genes involved in lipid metabolism. This is DNA-binding protein inhibitor ID-2 (ID2) from Homo sapiens (Human).